The sequence spans 349 residues: GATA zinc finger domain-containing protein 24 (349 aa).

Composition is skewed to low complexity over residues Asn-95–Asn-169 and Asn-177–Ser-195. Disordered regions lie at residues Asn-95–Lys-227 and Asp-250–Gln-294. Residues Glu-196–Asn-212 show a composition bias toward basic and acidic residues. The span at Ser-257–Ser-272 shows a compositional bias: low complexity. Basic residues predominate over residues Lys-278 to Lys-289. The segment at Cys-295 to Cys-323 adopts a GATA-type zinc-finger fold.

The protein is GATA zinc finger domain-containing protein 24 (gtaX) of Dictyostelium discoideum (Social amoeba).